The chain runs to 210 residues: UPF0637 protein RBAM_014510 (210 aa).

It belongs to the UPF0637 family.

The protein is UPF0637 protein RBAM_014510 of Bacillus velezensis (strain DSM 23117 / BGSC 10A6 / LMG 26770 / FZB42) (Bacillus amyloliquefaciens subsp. plantarum).